The chain runs to 40 residues: 67 kDa serum albumin (40 aa).

Residues 1-40 enclose the Albumin domain; the sequence is DAEHKSEIVHRFNDLKEEKFKGAALITFAQFLHKKPEEEA. H4 contributes to the Cu cation binding site.

Belongs to the ALB/AFP/VDB family. In terms of tissue distribution, plasma.

The protein resides in the secreted. Functionally, serum albumin, the main protein of plasma, has a good binding capacity for water, Ca(2+), Na(+), K(+), fatty acids, hormones, bilirubin and drugs. Its main function is the regulation of the colloidal osmotic pressure of blood. The sequence is that of 67 kDa serum albumin from Trachemys scripta (Red-eared slider turtle).